The sequence spans 244 residues: Adenosylcobinamide-GDP ribazoletransferase (244 aa).

A run of 5 helical transmembrane segments spans residues 33 to 53, 57 to 77, 109 to 129, 132 to 152, and 176 to 196; these read WFAVVGLLVGALVAALGWLGA, PWLAALLMLVTWVWVTGGLHL, FAVITLALQLLAKLVLLMLAV, GVGWSALVLLPAWARLGAVWW, and FWLSWLLLAALSAWLAPVLLL.

The protein belongs to the CobS family. Mg(2+) is required as a cofactor.

The protein localises to the cell inner membrane. It carries out the reaction alpha-ribazole + adenosylcob(III)inamide-GDP = adenosylcob(III)alamin + GMP + H(+). It catalyses the reaction alpha-ribazole 5'-phosphate + adenosylcob(III)inamide-GDP = adenosylcob(III)alamin 5'-phosphate + GMP + H(+). It functions in the pathway cofactor biosynthesis; adenosylcobalamin biosynthesis; adenosylcobalamin from cob(II)yrinate a,c-diamide: step 7/7. Its function is as follows. Joins adenosylcobinamide-GDP and alpha-ribazole to generate adenosylcobalamin (Ado-cobalamin). Also synthesizes adenosylcobalamin 5'-phosphate from adenosylcobinamide-GDP and alpha-ribazole 5'-phosphate. This is Adenosylcobinamide-GDP ribazoletransferase from Laribacter hongkongensis (strain HLHK9).